Reading from the N-terminus, the 176-residue chain is HTH-type transcriptional regulator DctR (176 aa).

The 66-residue stretch at 109 to 174 folds into the HTH luxR-type domain; sequence VPEANVSLSR…ELVRHQHIDY (66 aa). The H-T-H motif DNA-binding region spans 133 to 152; it reads TEDILEKLKISLKTFYCHKH.

Its function is as follows. May act as a transcriptional regulator of dctA. This Shigella flexneri protein is HTH-type transcriptional regulator DctR (dctR).